The chain runs to 495 residues: Probable staphylococcal-like nuclease CAN4 (495 aa).

Gly2 is lipidated: N-myristoyl glycine. Cys11 is lipidated: S-palmitoyl cysteine. Disordered stretches follow at residues 45 to 68 (DLQV…RPAL) and 81 to 101 (LQVP…PPRP). Residues 50 to 66 (LSPPPPSTRQQQPPPRP) show a composition bias toward pro residues. Residues 297–470 (KTLPVNAKCI…RDARQGLWAY (174 aa)) form the TNase-like domain. Asp310 contributes to the Ca(2+) binding site. The active site involves Arg377. Ca(2+) is bound at residue Asp382. Residues Glu385 and Arg419 contribute to the active site.

Belongs to the thermonuclease family. It depends on Ca(2+) as a cofactor.

It localises to the cell membrane. Functionally, enzyme that catalyzes the hydrolysis of both DNA and RNA at the 5' position of the phosphodiester bond. This chain is Probable staphylococcal-like nuclease CAN4, found in Oryza sativa subsp. japonica (Rice).